A 134-amino-acid chain; its full sequence is Cerato-platanin (134 aa).

An N-terminal signal peptide occupies residues Met-1–Ala-14. The segment at Ser-18–Asp-20 is binding of oligomers of N-acetylglucosamine (GlcNAc). Binding of N-acetylglucosamine tetramer (GlcNAc-4) regions lie at residues Ser-31 to Ala-43, Gly-65 to Ser-68, and Asp-91 to Gly-95. 2 cysteine pairs are disulfide-bonded: Cys-34–Cys-71 and Cys-74–Cys-129. The segment at Ala-113–Val-116 is binding of oligomers of N-acetylglucosamine (GlcNAc).

The protein belongs to the cerato-platanin family. As to quaternary structure, monomer.

It localises to the secreted. It is found in the cell wall. In terms of biological role, phytotoxin which causes production of phytoalexin in platanus acerifolia, platanus occidentalis and platanus orientalis. Induces cell necrosis in tobacco leaves, and in callus cells and leaves of P.acerifolia. Induces reactive oxygen species (ROS) synthesis, nitric oxide (NO) production and mitogen-activated protein kinases (MAPKs) phosphorylation in the leaves of A.thaliana and P.acerifolia. Results in H(2)O(2) production on the epidermis around the stomata, rapid closure of the stomata, reduced photosynthetic and CO(2) assimilation rate, and an increase in a number of volatile organic compound (VOC) emission in A.thaliana leaves. Induces overexpression of genes related to salicylic acid- and ethylene-signaling, camalexin synthesis, ROS production and oxidative stress, and genes of various receptor kinases, and down-regulation of a number of jasmonic acid (JA)-signaling genes in A.thaliana leaves. Renders resistance against C.platani in A.thaliana and P.acerifolia. Renders localised resistance of A.thaliana against infection by virulent foliar pathogens B.cinerea and P.syringae pv. tomato. Binds cellulose analog carboxymethyl cellulose (CMC). Expansin-like protein with probable fungal and plant cell wall loosening activity based on its non-enzymatic cellulose weakening activity in vitro. Increases glucose production by cellulase after pre-incubation of cellulose with this protein. In contrast, according to PubMed:23512479, no synergistic effect with cellulases. May have a structural role in the fungal cell wall based on its ability to bind chitin, but does not bind beta-1,3-glucan. In Ceratocystis fimbriata f. sp. platani, this protein is Cerato-platanin.